The chain runs to 256 residues: 4-hydroxy-tetrahydrodipicolinate reductase (256 aa).

8–13 lines the NAD(+) pocket; it reads GATGRV. NADP(+) is bound at residue Lys-36. NAD(+)-binding positions include 89–91 and 113–116; these read GTT and ATNM. His-145 serves as the catalytic Proton donor/acceptor. His-146 is a (S)-2,3,4,5-tetrahydrodipicolinate binding site. The active-site Proton donor is Lys-149. 155-156 contributes to the (S)-2,3,4,5-tetrahydrodipicolinate binding site; sequence GT.

It belongs to the DapB family.

The protein resides in the cytoplasm. The catalysed reaction is (S)-2,3,4,5-tetrahydrodipicolinate + NAD(+) + H2O = (2S,4S)-4-hydroxy-2,3,4,5-tetrahydrodipicolinate + NADH + H(+). It catalyses the reaction (S)-2,3,4,5-tetrahydrodipicolinate + NADP(+) + H2O = (2S,4S)-4-hydroxy-2,3,4,5-tetrahydrodipicolinate + NADPH + H(+). Its pathway is amino-acid biosynthesis; L-lysine biosynthesis via DAP pathway; (S)-tetrahydrodipicolinate from L-aspartate: step 4/4. Functionally, catalyzes the conversion of 4-hydroxy-tetrahydrodipicolinate (HTPA) to tetrahydrodipicolinate. This chain is 4-hydroxy-tetrahydrodipicolinate reductase, found in Wolinella succinogenes (strain ATCC 29543 / DSM 1740 / CCUG 13145 / JCM 31913 / LMG 7466 / NCTC 11488 / FDC 602W) (Vibrio succinogenes).